The primary structure comprises 575 residues: UvrABC system protein C (575 aa).

The GIY-YIG domain maps to 16–94; it reads SQPGVYRMYD…IKLYQPRYNV (79 aa). The 36-residue stretch at 204 to 239 folds into the UVR domain; sequence DQVLTQLISRMETASQNLEFEEAARIRDQIQAVRRV.

It belongs to the UvrC family. In terms of assembly, interacts with UvrB in an incision complex.

It localises to the cytoplasm. Its function is as follows. The UvrABC repair system catalyzes the recognition and processing of DNA lesions. UvrC both incises the 5' and 3' sides of the lesion. The N-terminal half is responsible for the 3' incision and the C-terminal half is responsible for the 5' incision. The protein is UvrABC system protein C of Shigella dysenteriae serotype 1 (strain Sd197).